The sequence spans 195 residues: MAKDEEKNSQASAAPNEGEVKAKQEQTSAKEPAAKAGETEKVADLQKQVEELTKQLDDQKDQNLRAQAEMQNMTKRFKKEQAQLLKYDGQDLAKGILPVLDNLKRALEIEVEDENGQQLKKGIQMVHDHLEKALADHDIKEVEALNQPFDPTTQQAVQTVAASGDQKPDTVVQVLQAGYVLHDRVLRPAMVIVAQ.

Residues 1–60 (MAKDEEKNSQASAAPNEGEVKAKQEQTSAKEPAAKAGETEKVADLQKQVEELTKQLDDQK) form a disordered region. The span at 37 to 60 (GETEKVADLQKQVEELTKQLDDQK) shows a compositional bias: basic and acidic residues.

This sequence belongs to the GrpE family. Homodimer.

The protein localises to the cytoplasm. Participates actively in the response to hyperosmotic and heat shock by preventing the aggregation of stress-denatured proteins, in association with DnaK and GrpE. It is the nucleotide exchange factor for DnaK and may function as a thermosensor. Unfolded proteins bind initially to DnaJ; upon interaction with the DnaJ-bound protein, DnaK hydrolyzes its bound ATP, resulting in the formation of a stable complex. GrpE releases ADP from DnaK; ATP binding to DnaK triggers the release of the substrate protein, thus completing the reaction cycle. Several rounds of ATP-dependent interactions between DnaJ, DnaK and GrpE are required for fully efficient folding. This is Protein GrpE from Limosilactobacillus fermentum (strain NBRC 3956 / LMG 18251) (Lactobacillus fermentum).